Here is a 574-residue protein sequence, read N- to C-terminus: Glycine--tRNA ligase (574 aa).

Arg-96 and Glu-162 together coordinate substrate. Residues 194-196, 204-209, 327-328, and 450-453 contribute to the ATP site; these read RNE, IRLREF, EC, and GIDR. 209 to 213 is a substrate binding site; the sequence is FTQAE. Residue 446–450 participates in substrate binding; it reads EPSYG.

Belongs to the class-II aminoacyl-tRNA synthetase family.

It localises to the cytoplasm. The enzyme catalyses tRNA(Gly) + glycine + ATP = glycyl-tRNA(Gly) + AMP + diphosphate. Its function is as follows. Catalyzes the attachment of glycine to tRNA(Gly). The chain is Glycine--tRNA ligase from Methanococcus maripaludis (strain C7 / ATCC BAA-1331).